We begin with the raw amino-acid sequence, 421 residues long: Methionine aminopeptidase 2 (421 aa).

The tract at residues M1–S53 is disordered. A compositionally biased stretch (basic and acidic residues) spans D28–S40. Residue S35 is modified to Phosphoserine. The segment covering K41–S53 has biased composition (basic residues). H174 serves as a coordination point for substrate. Positions 194, 205, and 274 each coordinate a divalent metal cation. Residue H282 coordinates substrate. A divalent metal cation-binding residues include E307 and E402.

Belongs to the peptidase M24A family. Methionine aminopeptidase eukaryotic type 2 subfamily. The cofactor is Co(2+). Zn(2+) is required as a cofactor. Mn(2+) serves as cofactor. Requires Fe(2+) as cofactor.

It is found in the cytoplasm. The catalysed reaction is Release of N-terminal amino acids, preferentially methionine, from peptides and arylamides.. Cotranslationally removes the N-terminal methionine from nascent proteins. The N-terminal methionine is often cleaved when the second residue in the primary sequence is small and uncharged (Met-Ala-, Cys, Gly, Pro, Ser, Thr, or Val). The protein is Methionine aminopeptidase 2 of Saccharomyces cerevisiae (strain RM11-1a) (Baker's yeast).